The sequence spans 331 residues: Cytosolic 5'-nucleotidase 3A (331 aa).

The active-site Nucleophile is D83. Residues D83 and D85 each contribute to the Mg(2+) site. D85 serves as the catalytic Proton donor. CMP is bound at residue E130. N(7)-methyl-GMP is bound by residues E130 and S151. Substrate contacts are provided by residues 198–200 and K247; that span reads SAG. D272 provides a ligand contact to Mg(2+). The residue at position 273 (S273) is a Phosphoserine.

Belongs to the pyrimidine 5'-nucleotidase family. Monomer. Isoform 2 is highly expressed in the brain, heart, spleen, kidney and blood. Isoform 2 is expressed (at protein level) in the spleen, skeletal muscle and gastrointestinal epithelia.

It is found in the cytoplasm. It carries out the reaction N(7)-methyl-GMP + H2O = N(7)-methylguanosine + phosphate. The enzyme catalyses a ribonucleoside 5'-phosphate + H2O = a ribonucleoside + phosphate. In terms of biological role, nucleotidase which shows specific activity towards cytidine monophosphate (CMP) and 7-methylguanosine monophosphate (m(7)GMP). CMP seems to be the preferred substrate. The sequence is that of Cytosolic 5'-nucleotidase 3A (Nt5c3a) from Mus musculus (Mouse).